The primary structure comprises 369 residues: Muscleblind-like protein 1 (369 aa).

C3H1-type zinc fingers lie at residues 13 to 41, 47 to 73, 178 to 206, and 214 to 240; these read WLTL…HPSK, NGRV…HPPP, TDRL…HPAD, and DNTV…HPPA.

The protein belongs to the muscleblind family.

It is found in the nucleus. The protein localises to the cytoplasm. It localises to the cytoplasmic granule. Its function is as follows. Involved in pre-mRNA alternative splicing regulation. Binds to CUG triplet repeat in RNA. This is Muscleblind-like protein 1 (MBNL1) from Gallus gallus (Chicken).